We begin with the raw amino-acid sequence, 286 residues long: Simplagrin (286 aa).

The first 20 residues, 1–20, serve as a signal peptide directing secretion; it reads MKKFCLIFLLLALTALHVKG. The tract at residues 17–179 is disordered; that stretch reads HVKGSPIPDE…GSSSGGEESA (163 aa). Acidic residues-rich tracts occupy residues 24-69 and 103-129; these read PDEE…DGQE and VESG…TGGE. Asn-116 carries N-linked (GlcNAc...) asparagine glycosylation. A compositionally biased stretch (low complexity) spans 166–177; sequence SNRAGSSSGGEE.

Belongs to the aegyptin family. As to quaternary structure, monomeric in solution; likely has an elongated non-globular form. Interacts with human and rat collagens (via a RGQOGVMGF peptide, where O is hydroxyproline). Post-translationally, not glycosylated. As to expression, salivary gland.

The protein resides in the secreted. Inhibits host platelet aggregation induced by low concentrations of collagen via blocking the von Willebrand Factor (VWF) interaction with collagen. The protein is Simplagrin of Simulium nigrimanum (Black fly).